A 149-amino-acid polypeptide reads, in one-letter code: Large ribosomal subunit protein uL13 (149 aa).

It belongs to the universal ribosomal protein uL13 family. Part of the 50S ribosomal subunit.

In terms of biological role, this protein is one of the early assembly proteins of the 50S ribosomal subunit, although it is not seen to bind rRNA by itself. It is important during the early stages of 50S assembly. The protein is Large ribosomal subunit protein uL13 of Saccharolobus solfataricus (strain ATCC 35092 / DSM 1617 / JCM 11322 / P2) (Sulfolobus solfataricus).